Here is a 460-residue protein sequence, read N- to C-terminus: Ribosomal protein uS12 methylthiotransferase RimO (460 aa).

Positions Asn-16–Ala-130 constitute an MTTase N-terminal domain. Residues Cys-25, Cys-61, Cys-93, Cys-164, Cys-168, and Cys-171 each contribute to the [4Fe-4S] cluster site. A Radical SAM core domain is found at Ser-150–Lys-382. The 71-residue stretch at Lys-385 to Lys-455 folds into the TRAM domain.

Belongs to the methylthiotransferase family. RimO subfamily. The cofactor is [4Fe-4S] cluster.

It localises to the cytoplasm. It catalyses the reaction L-aspartate(89)-[ribosomal protein uS12]-hydrogen + (sulfur carrier)-SH + AH2 + 2 S-adenosyl-L-methionine = 3-methylsulfanyl-L-aspartate(89)-[ribosomal protein uS12]-hydrogen + (sulfur carrier)-H + 5'-deoxyadenosine + L-methionine + A + S-adenosyl-L-homocysteine + 2 H(+). In terms of biological role, catalyzes the methylthiolation of an aspartic acid residue of ribosomal protein uS12. The polypeptide is Ribosomal protein uS12 methylthiotransferase RimO (Chlamydia caviae (strain ATCC VR-813 / DSM 19441 / 03DC25 / GPIC) (Chlamydophila caviae)).